The primary structure comprises 642 residues: Threonine--tRNA ligase (642 aa).

One can recognise a TGS domain in the interval 1 to 61 (MPVIRFCDGS…TEDSSISFIS (61 aa)). The interval 243–534 (DHRKIGKLLN…LIEEFSGKLP (292 aa)) is catalytic. Zn(2+) contacts are provided by Cys-334, His-385, and His-511.

It belongs to the class-II aminoacyl-tRNA synthetase family. As to quaternary structure, homodimer. Zn(2+) serves as cofactor.

The protein localises to the cytoplasm. The catalysed reaction is tRNA(Thr) + L-threonine + ATP = L-threonyl-tRNA(Thr) + AMP + diphosphate + H(+). Functionally, catalyzes the attachment of threonine to tRNA(Thr) in a two-step reaction: L-threonine is first activated by ATP to form Thr-AMP and then transferred to the acceptor end of tRNA(Thr). Also edits incorrectly charged L-seryl-tRNA(Thr). This Buchnera aphidicola subsp. Schizaphis graminum (strain Sg) protein is Threonine--tRNA ligase.